The sequence spans 931 residues: Isoleucine--tRNA ligase (931 aa).

Positions 57 to 67 (PFANGNIHMGH) match the 'HIGH' region motif. Residue Glu-556 participates in L-isoleucyl-5'-AMP binding. Positions 597 to 601 (KMSKS) match the 'KMSKS' region motif. Lys-600 contacts ATP. Zn(2+)-binding residues include Cys-890, Cys-893, Cys-910, and Cys-913.

It belongs to the class-I aminoacyl-tRNA synthetase family. IleS type 1 subfamily. In terms of assembly, monomer. Requires Zn(2+) as cofactor.

It localises to the cytoplasm. The catalysed reaction is tRNA(Ile) + L-isoleucine + ATP = L-isoleucyl-tRNA(Ile) + AMP + diphosphate. Catalyzes the attachment of isoleucine to tRNA(Ile). As IleRS can inadvertently accommodate and process structurally similar amino acids such as valine, to avoid such errors it has two additional distinct tRNA(Ile)-dependent editing activities. One activity is designated as 'pretransfer' editing and involves the hydrolysis of activated Val-AMP. The other activity is designated 'posttransfer' editing and involves deacylation of mischarged Val-tRNA(Ile). This Lactobacillus delbrueckii subsp. bulgaricus (strain ATCC BAA-365 / Lb-18) protein is Isoleucine--tRNA ligase.